A 187-amino-acid chain; its full sequence is MNNEKELKKEETSVENKEKKVATEEIKKEKKDYKKIIQDLEKQIESCQKEIEFQKSLRNADIANLTKKRNEQEALVRKYGSSNLAEDLIKPIDLLKKVVETPTDIPELQNYLMGFKMIISQIENAFETNGIKAMGVKAGDEFDSSFHEANESLENSGMESNKIVSVISDGYMIHDRVLIHAIVKVAK.

Positions 1-23 (MNNEKELKKEETSVENKEKKVAT) are disordered.

Belongs to the GrpE family. As to quaternary structure, homodimer.

The protein resides in the cytoplasm. Functionally, participates actively in the response to hyperosmotic and heat shock by preventing the aggregation of stress-denatured proteins, in association with DnaK and GrpE. It is the nucleotide exchange factor for DnaK and may function as a thermosensor. Unfolded proteins bind initially to DnaJ; upon interaction with the DnaJ-bound protein, DnaK hydrolyzes its bound ATP, resulting in the formation of a stable complex. GrpE releases ADP from DnaK; ATP binding to DnaK triggers the release of the substrate protein, thus completing the reaction cycle. Several rounds of ATP-dependent interactions between DnaJ, DnaK and GrpE are required for fully efficient folding. In Mesoplasma florum (strain ATCC 33453 / NBRC 100688 / NCTC 11704 / L1) (Acholeplasma florum), this protein is Protein GrpE.